The following is a 911-amino-acid chain: Protein translocase subunit SecA (911 aa).

Residues Q86, 104-108 (GEGKT), and D512 contribute to the ATP site. The segment at 869–888 (ALADDGQPQGAQPVRNVLPK) is disordered. Residues C895, C897, C906, and H907 each coordinate Zn(2+).

The protein belongs to the SecA family. Monomer and homodimer. Part of the essential Sec protein translocation apparatus which comprises SecA, SecYEG and auxiliary proteins SecDF-YajC and YidC. Requires Zn(2+) as cofactor.

Its subcellular location is the cell inner membrane. It localises to the cytoplasm. It carries out the reaction ATP + H2O + cellular proteinSide 1 = ADP + phosphate + cellular proteinSide 2.. In terms of biological role, part of the Sec protein translocase complex. Interacts with the SecYEG preprotein conducting channel. Has a central role in coupling the hydrolysis of ATP to the transfer of proteins into and across the cell membrane, serving both as a receptor for the preprotein-SecB complex and as an ATP-driven molecular motor driving the stepwise translocation of polypeptide chains across the membrane. The sequence is that of Protein translocase subunit SecA from Bordetella parapertussis (strain 12822 / ATCC BAA-587 / NCTC 13253).